The following is a 477-amino-acid chain: UDP-N-acetylmuramate--L-alanine ligase (477 aa).

Residue 122 to 128 (GTHGKTT) participates in ATP binding.

The protein belongs to the MurCDEF family.

It is found in the cytoplasm. The enzyme catalyses UDP-N-acetyl-alpha-D-muramate + L-alanine + ATP = UDP-N-acetyl-alpha-D-muramoyl-L-alanine + ADP + phosphate + H(+). It participates in cell wall biogenesis; peptidoglycan biosynthesis. Its function is as follows. Cell wall formation. The protein is UDP-N-acetylmuramate--L-alanine ligase of Xanthomonas axonopodis pv. citri (strain 306).